Reading from the N-terminus, the 375-residue chain is Chaperone protein DnaJ (375 aa).

In terms of domain architecture, J spans 4 to 68 (DYYEILGVSR…ETRARYDRFG (65 aa)). Residues 135-217 (GGEKEIRISH…CDGKGANQVT (83 aa)) form a CR-type zinc finger. 8 residues coordinate Zn(2+): Cys-148, Cys-151, Cys-165, Cys-168, Cys-191, Cys-194, Cys-205, and Cys-208. 4 CXXCXGXG motif repeats span residues 148-155 (CEVCSGSG), 165-172 (CSTCSGSG), 191-198 (CPTCNGTG), and 205-212 (CDACDGKG).

Belongs to the DnaJ family. In terms of assembly, homodimer. The cofactor is Zn(2+).

The protein localises to the cytoplasm. In terms of biological role, participates actively in the response to hyperosmotic and heat shock by preventing the aggregation of stress-denatured proteins and by disaggregating proteins, also in an autonomous, DnaK-independent fashion. Unfolded proteins bind initially to DnaJ; upon interaction with the DnaJ-bound protein, DnaK hydrolyzes its bound ATP, resulting in the formation of a stable complex. GrpE releases ADP from DnaK; ATP binding to DnaK triggers the release of the substrate protein, thus completing the reaction cycle. Several rounds of ATP-dependent interactions between DnaJ, DnaK and GrpE are required for fully efficient folding. Also involved, together with DnaK and GrpE, in the DNA replication of plasmids through activation of initiation proteins. The sequence is that of Chaperone protein DnaJ from Nostoc punctiforme (strain ATCC 29133 / PCC 73102).